The chain runs to 115 residues: Large ribosomal subunit protein bL19 (115 aa).

Belongs to the bacterial ribosomal protein bL19 family.

Its function is as follows. This protein is located at the 30S-50S ribosomal subunit interface and may play a role in the structure and function of the aminoacyl-tRNA binding site. This is Large ribosomal subunit protein bL19 from Enterobacter sp. (strain 638).